A 295-amino-acid polypeptide reads, in one-letter code: MSHEIMRLSAFAPAKVNLFLHVGGPDGEGYHPISSLMVFADVGDRVNLQPADAPAFETSGPFGDQIPAGGDNLVVRAGQAFHRRLGGPVPPYRLILEKHLPIAAGLGGGSSDAGAALKLLRDALAPALSDDDLEALAASLGADGAACLRARALIAEGRGERLSPAPRLPELNAVLVNPGAPSPTGAVYRAYDAGVHPDGAAMPPMPDHLESAEEAAAWLAFATRNDLEAPAVRLEPHIGEVLDVLRGEPESLLVRMSGSGATCFALCASDIEAEGLAERLETMRPDWWVRRCRLS.

Residue Lys15 is part of the active site. Position 101–111 (101–111) interacts with ATP; that stretch reads PIAAGLGGGSS. Asp143 is a catalytic residue.

This sequence belongs to the GHMP kinase family. IspE subfamily.

It catalyses the reaction 4-CDP-2-C-methyl-D-erythritol + ATP = 4-CDP-2-C-methyl-D-erythritol 2-phosphate + ADP + H(+). Its pathway is isoprenoid biosynthesis; isopentenyl diphosphate biosynthesis via DXP pathway; isopentenyl diphosphate from 1-deoxy-D-xylulose 5-phosphate: step 3/6. Catalyzes the phosphorylation of the position 2 hydroxy group of 4-diphosphocytidyl-2C-methyl-D-erythritol. This chain is 4-diphosphocytidyl-2-C-methyl-D-erythritol kinase, found in Caulobacter vibrioides (strain ATCC 19089 / CIP 103742 / CB 15) (Caulobacter crescentus).